We begin with the raw amino-acid sequence, 40 residues long: Photosystem II reaction center protein J (40 aa).

A helical transmembrane segment spans residues 8–28; that stretch reads IPLWLIGTIAGILVIGLVGIF.

The protein belongs to the PsbJ family. PSII is composed of 1 copy each of membrane proteins PsbA, PsbB, PsbC, PsbD, PsbE, PsbF, PsbH, PsbI, PsbJ, PsbK, PsbL, PsbM, PsbT, PsbX, PsbY, PsbZ, Psb30/Ycf12, at least 3 peripheral proteins of the oxygen-evolving complex and a large number of cofactors. It forms dimeric complexes.

The protein resides in the plastid. It localises to the chloroplast thylakoid membrane. Functionally, one of the components of the core complex of photosystem II (PSII). PSII is a light-driven water:plastoquinone oxidoreductase that uses light energy to abstract electrons from H(2)O, generating O(2) and a proton gradient subsequently used for ATP formation. It consists of a core antenna complex that captures photons, and an electron transfer chain that converts photonic excitation into a charge separation. This Anthoceros angustus (Hornwort) protein is Photosystem II reaction center protein J.